We begin with the raw amino-acid sequence, 638 residues long: Phosphomethylpyrimidine synthase (638 aa).

Substrate-binding positions include N236, M265, Y294, H330, 350–352 (SRG), 391–394 (DGLR), and E430. H434 contacts Zn(2+). Y457 provides a ligand contact to substrate. Position 498 (H498) interacts with Zn(2+). Positions 578, 581, and 586 each coordinate [4Fe-4S] cluster. The span at 608-624 (AEGASQQEAEQGMQEMS) shows a compositional bias: low complexity. The segment at 608–633 (AEGASQQEAEQGMQEMSQKYKDAGRR) is disordered.

It belongs to the ThiC family. Homodimer. The cofactor is [4Fe-4S] cluster.

The catalysed reaction is 5-amino-1-(5-phospho-beta-D-ribosyl)imidazole + S-adenosyl-L-methionine = 4-amino-2-methyl-5-(phosphooxymethyl)pyrimidine + CO + 5'-deoxyadenosine + formate + L-methionine + 3 H(+). The protein operates within cofactor biosynthesis; thiamine diphosphate biosynthesis. In terms of biological role, catalyzes the synthesis of the hydroxymethylpyrimidine phosphate (HMP-P) moiety of thiamine from aminoimidazole ribotide (AIR) in a radical S-adenosyl-L-methionine (SAM)-dependent reaction. The sequence is that of Phosphomethylpyrimidine synthase from Hahella chejuensis (strain KCTC 2396).